Consider the following 390-residue polypeptide: L-serine phosphate decarboxylase Cj1436c (390 aa).

Residue K243 is modified to N6-(pyridoxal phosphate)lysine.

The protein belongs to the class-I pyridoxal-phosphate-dependent aminotransferase family. Pyridoxal 5'-phosphate is required as a cofactor.

The enzyme catalyses O-phospho-L-serine + H(+) = phosphoethanolamine + CO2. The protein operates within capsule biogenesis; capsule polysaccharide biosynthesis. Its function is as follows. Pyridoxal phosphate (PLP)-dependent decarboxylase involved in the biosynthesis of amidated D-glucuronic acid structures found on the capsular polysaccharide (CPS) of C.jejuni. Catalyzes the decarboxylation of L-serine phosphate to ethanolamine phosphate. Less active with L-threonine phosphate. No activity with L-serine, L-threonine, L-aspartate or L-glutamate. This Campylobacter jejuni subsp. jejuni serotype O:2 (strain ATCC 700819 / NCTC 11168) protein is L-serine phosphate decarboxylase Cj1436c.